An 829-amino-acid chain; its full sequence is Periplasmic nitrate reductase (829 aa).

Residues 1–31 (MKLSRRDFMKANAVAAAAAAAGLTIPTVARA) constitute a signal peptide (tat-type signal). In terms of domain architecture, 4Fe-4S Mo/W bis-MGD-type spans 40–96 (ITWDKAPCRFCGTGCGVLVGTQNGRIVASQGDPDAPVNRGLNCIKGYFLPKIMYGKD). Cys-47, Cys-50, Cys-54, and Cys-82 together coordinate [4Fe-4S] cluster. Residues Lys-84, Gln-151, Asn-176, Cys-180, 213–220 (WGSNMAEM), 263–265 (QSD), Met-373, Gln-377, Asn-483, 509–510 (SD), Lys-532, Asp-559, and 719–728 (TGRVLEHWHT) each bind Mo-bis(molybdopterin guanine dinucleotide). Phe-795 is a substrate binding site. The Mo-bis(molybdopterin guanine dinucleotide) site is built by Asn-803 and Lys-820.

The protein belongs to the prokaryotic molybdopterin-containing oxidoreductase family. NasA/NapA/NarB subfamily. As to quaternary structure, component of the periplasmic nitrate reductase NapAB complex composed of NapA and NapB. Requires [4Fe-4S] cluster as cofactor. Mo-bis(molybdopterin guanine dinucleotide) is required as a cofactor. Predicted to be exported by the Tat system. The position of the signal peptide cleavage has not been experimentally proven.

The protein resides in the periplasm. The enzyme catalyses 2 Fe(II)-[cytochrome] + nitrate + 2 H(+) = 2 Fe(III)-[cytochrome] + nitrite + H2O. Its function is as follows. Catalytic subunit of the periplasmic nitrate reductase complex NapAB. Receives electrons from NapB and catalyzes the reduction of nitrate to nitrite. The polypeptide is Periplasmic nitrate reductase (Edwardsiella ictaluri (strain 93-146)).